The sequence spans 340 residues: Anthocyanidin reductase (340 aa).

The NADP(+) site is built by Lys49 and Tyr169.

Belongs to the NAD(P)-dependent epimerase/dehydratase family. Dihydroflavonol-4-reductase subfamily. As to quaternary structure, homo- or heterodimer. In terms of tissue distribution, flowers and young siliques. Detected specifically in the endothelium of seed coat.

It catalyses the reaction a (2R,3R)-flavan-3-ol + 2 NAD(+) = an anthocyanidin with a 3-hydroxy group + 2 NADH + 2 H(+). The catalysed reaction is a (2R,3R)-flavan-3-ol + 2 NADP(+) = an anthocyanidin with a 3-hydroxy group + 2 NADPH + 2 H(+). Its pathway is secondary metabolite biosynthesis; flavonoid biosynthesis. With respect to regulation, inhibited by (+)-catechin, quercetin and (+)- and (-)-dihydroquercetin. Not inhibited by salt. Positive cooperativity with NADPH acting as cosubstrate and modulator. Functionally, involved in the biosynthesis of condensed tannins. Converts cyanidin into (-)-epicatechin as the major product. This Arabidopsis thaliana (Mouse-ear cress) protein is Anthocyanidin reductase (BAN).